The primary structure comprises 309 residues: Porphobilinogen deaminase (309 aa).

S-(dipyrrolylmethanemethyl)cysteine is present on Cys241.

The protein belongs to the HMBS family. In terms of assembly, monomer. It depends on dipyrromethane as a cofactor.

The enzyme catalyses 4 porphobilinogen + H2O = hydroxymethylbilane + 4 NH4(+). The protein operates within porphyrin-containing compound metabolism; protoporphyrin-IX biosynthesis; coproporphyrinogen-III from 5-aminolevulinate: step 2/4. Tetrapolymerization of the monopyrrole PBG into the hydroxymethylbilane pre-uroporphyrinogen in several discrete steps. The chain is Porphobilinogen deaminase from Campylobacter concisus (strain 13826).